The sequence spans 288 residues: MEPALGSERRSPPGPGVPRPPPRGHAPSTAAPAPSPAPMSSSVQSDEERQPRISESGQFSDGLEDRGLLESSTRLKPHEAQNYRKKALWVSWLSIIVTLALAVAAFTVSVMRYSASAFGFAFDAILDVLSSAIVLWRYSNAAAVHSANREYIACVILGVIFLLSSICIVVKAIHDLSTRLLPEVDDFLFSVSILSGILCSVLAVLKFMLGKVLTSRALITDGFNSLVGGVMGFSILLSAEVFKHNAAVWYLDGSIGVLIGLTIFAYGVKLLIDMVPRVRQTRHYEMFE.

The segment at 1–64 is disordered; the sequence is MEPALGSERR…ESGQFSDGLE (64 aa). The Cytoplasmic segment spans residues 1 to 87; the sequence is MEPALGSERR…HEAQNYRKKA (87 aa). Serine 11 bears the Phosphoserine mark. Residues 12–24 are compositionally biased toward pro residues; the sequence is PPGPGVPRPPPRG. Low complexity predominate over residues 25–42; sequence HAPSTAAPAPSPAPMSSS. The required for interaction with MCOLN1 stretch occupies residues 41 to 71; that stretch reads SSVQSDEERQPRISESGQFSDGLEDRGLLES. Phosphoserine is present on residues serine 45, serine 54, serine 56, and serine 60. Residues 88–108 traverse the membrane as a helical segment; sequence LWVSWLSIIVTLALAVAAFTV. The Extracellular portion of the chain corresponds to 109–115; it reads SVMRYSA. The chain crosses the membrane as a helical span at residues 116 to 136; that stretch reads SAFGFAFDAILDVLSSAIVLW. Residues 137 to 149 lie on the Cytoplasmic side of the membrane; it reads RYSNAAAVHSANR. The helical transmembrane segment at 150 to 170 threads the bilayer; the sequence is EYIACVILGVIFLLSSICIVV. The Extracellular segment spans residues 171–186; sequence KAIHDLSTRLLPEVDD. A helical membrane pass occupies residues 187-207; that stretch reads FLFSVSILSGILCSVLAVLKF. Topologically, residues 208-216 are cytoplasmic; that stretch reads MLGKVLTSR. Residues 217–237 traverse the membrane as a helical segment; sequence ALITDGFNSLVGGVMGFSILL. The Extracellular portion of the chain corresponds to 238 to 254; it reads SAEVFKHNAAVWYLDGS. The helical transmembrane segment at 255–275 threads the bilayer; that stretch reads IGVLIGLTIFAYGVKLLIDMV. Topologically, residues 276–288 are cytoplasmic; it reads PRVRQTRHYEMFE.

The protein belongs to the TMEM163 family. In terms of assembly, homodimer. Interacts with MCOLN1. Interacts with SLC30A1, SLC30A2, SLC30A3 and SLC30A4. Widely expressed, with high expression in the brain, cerebellum, heart, lung and spleen. In the brain, mainly expressed in the glutaminergic neuron subpopulations.

Its subcellular location is the cytoplasmic vesicle. The protein localises to the secretory vesicle. It is found in the synaptic vesicle membrane. The protein resides in the early endosome membrane. It localises to the late endosome membrane. Its subcellular location is the lysosome membrane. The protein localises to the cell membrane. It carries out the reaction Zn(2+)(in) = Zn(2+)(out). In terms of biological role, zinc ion transporter that mediates zinc efflux and plays a crucial role in intracellular zinc homeostasis. Binds the divalent cations Zn(2+), Ni(2+), and to a minor extent Cu(2+). Is a functional modulator of P2X purinoceptors, including P2RX1, P2RX3, P2RX4 and P2RX7. Plays a role in central nervous system development and is required for myelination, and survival and proliferation of oligodendrocytes. The polypeptide is Transmembrane protein 163 (Tmem163) (Mus musculus (Mouse)).